A 175-amino-acid chain; its full sequence is Peptide deformylase (175 aa).

Fe cation contacts are provided by C98 and H140. Residue E141 is part of the active site. H144 lines the Fe cation pocket.

This sequence belongs to the polypeptide deformylase family. Fe(2+) serves as cofactor.

The catalysed reaction is N-terminal N-formyl-L-methionyl-[peptide] + H2O = N-terminal L-methionyl-[peptide] + formate. In terms of biological role, removes the formyl group from the N-terminal Met of newly synthesized proteins. Requires at least a dipeptide for an efficient rate of reaction. N-terminal L-methionine is a prerequisite for activity but the enzyme has broad specificity at other positions. The sequence is that of Peptide deformylase from Bradyrhizobium sp. (strain BTAi1 / ATCC BAA-1182).